Reading from the N-terminus, the 249-residue chain is MDPQTNSHQEVQQPSPKETDSQTPSETLYIRNIEEKIRLTMLKRILEHLFGSYGKVIDVQARKTLRMRGQAFVVFDNLENASRALKDLQGYPLYGKPMMIQYSKSKSDIIVQRESPEEIETRKKDRKNRREMLKRTSALQPAAPKPTHKKPVPKRNVGAERKSTINEDLLPPNKVLLLQNIPQEVNADVLTQIFEAFSGFQEVRMVPGRRGIAFVEYDSDREATVAKNGTTGMSLSGNQIKVTFARKAS.

The disordered stretch occupies residues 1–25; the sequence is MDPQTNSHQEVQQPSPKETDSQTPS. The RRM 1 domain occupies 26–105; the sequence is ETLYIRNIEE…KPMMIQYSKS (80 aa). A disordered region spans residues 113 to 157; sequence RESPEEIETRKKDRKNRREMLKRTSALQPAAPKPTHKKPVPKRNV. Positions 114-134 are enriched in basic and acidic residues; sequence ESPEEIETRKKDRKNRREMLK. The 74-residue stretch at 174–247 folds into the RRM 2 domain; sequence KVLLLQNIPQ…NQIKVTFARK (74 aa).

It belongs to the RRM U1 A/B'' family. Component of the spliceosome where it is associated with snRNP U1.

Its subcellular location is the nucleus. It is found in the nucleolus. In terms of biological role, involved in nuclear mRNA splicing. The polypeptide is U1 small nuclear ribonucleoprotein usp102 (Schizosaccharomyces pombe (strain 972 / ATCC 24843) (Fission yeast)).